The chain runs to 222 residues: Probable transaldolase (222 aa).

Catalysis depends on K91, which acts as the Schiff-base intermediate with substrate.

It belongs to the transaldolase family. Type 3B subfamily.

Its subcellular location is the cytoplasm. The catalysed reaction is D-sedoheptulose 7-phosphate + D-glyceraldehyde 3-phosphate = D-erythrose 4-phosphate + beta-D-fructose 6-phosphate. The protein operates within carbohydrate degradation; pentose phosphate pathway; D-glyceraldehyde 3-phosphate and beta-D-fructose 6-phosphate from D-ribose 5-phosphate and D-xylulose 5-phosphate (non-oxidative stage): step 2/3. In terms of biological role, transaldolase is important for the balance of metabolites in the pentose-phosphate pathway. The sequence is that of Probable transaldolase from Pelodictyon phaeoclathratiforme (strain DSM 5477 / BU-1).